A 283-amino-acid chain; its full sequence is Acetyl-coenzyme A carboxylase carboxyl transferase subunit beta (283 aa).

The CoA carboxyltransferase N-terminal domain maps to 23-283; that stretch reads LWIKCPSCSE…DFLMAGKAAA (261 aa). The Zn(2+) site is built by cysteine 27, cysteine 30, cysteine 46, and cysteine 49. The segment at 27 to 49 adopts a C4-type zinc-finger fold; the sequence is CPSCSEMLFTKEYEDNLSVCPHC.

This sequence belongs to the AccD/PCCB family. Acetyl-CoA carboxylase is a heterohexamer composed of biotin carboxyl carrier protein (AccB), biotin carboxylase (AccC) and two subunits each of ACCase subunit alpha (AccA) and ACCase subunit beta (AccD). Requires Zn(2+) as cofactor.

The protein localises to the cytoplasm. It catalyses the reaction N(6)-carboxybiotinyl-L-lysyl-[protein] + acetyl-CoA = N(6)-biotinyl-L-lysyl-[protein] + malonyl-CoA. Its pathway is lipid metabolism; malonyl-CoA biosynthesis; malonyl-CoA from acetyl-CoA: step 1/1. Component of the acetyl coenzyme A carboxylase (ACC) complex. Biotin carboxylase (BC) catalyzes the carboxylation of biotin on its carrier protein (BCCP) and then the CO(2) group is transferred by the transcarboxylase to acetyl-CoA to form malonyl-CoA. In Novosphingobium aromaticivorans (strain ATCC 700278 / DSM 12444 / CCUG 56034 / CIP 105152 / NBRC 16084 / F199), this protein is Acetyl-coenzyme A carboxylase carboxyl transferase subunit beta.